A 212-amino-acid polypeptide reads, in one-letter code: uncharacterized protein (212 aa).

Residues 105–187 enclose the Toprim domain; that stretch reads NTIYLVEGDF…QVKVVQLKGK (83 aa).

This is an uncharacterized protein from Mycoplasma pneumoniae (strain ATCC 29342 / M129 / Subtype 1) (Mycoplasmoides pneumoniae).